The following is a 246-amino-acid chain: MQIDLNADLGEGCANDEALLALISSANIACGWHAGDAATMVQTVKWALERGVAIGAHPSYPDRENFGRTEMQRDPEHVYADVLYQIGALDAIVRAQGGELHHVKPHGALYNQAVRDPALARAIVRAVRDFDADLVFFGLAGSQMIDIAREAGLRVKQEVFADRGYNPDGTLVKRGSPGALHEDEEVALNQTLTMVREKRVRAIDGTWVPIQAETVCLHGDGAHALAFARRIRERLGAEGIAVRAGD.

This sequence belongs to the LamB/PxpA family. In terms of assembly, forms a complex composed of PxpA, PxpB and PxpC.

It carries out the reaction 5-oxo-L-proline + ATP + 2 H2O = L-glutamate + ADP + phosphate + H(+). Catalyzes the cleavage of 5-oxoproline to form L-glutamate coupled to the hydrolysis of ATP to ADP and inorganic phosphate. This is 5-oxoprolinase subunit A from Cupriavidus necator (strain ATCC 17699 / DSM 428 / KCTC 22496 / NCIMB 10442 / H16 / Stanier 337) (Ralstonia eutropha).